The following is a 156-amino-acid chain: Oxidized purine nucleoside triphosphate hydrolase (156 aa).

In terms of domain architecture, Nudix hydrolase spans 3–132 (TSRLYTLVLV…WFPLLLQKKK (130 aa)). 2-oxo-dATP is bound at residue T8. Residue K23 coordinates 8-oxo-dGTP. Residues N33 and 35 to 38 (FGGK) contribute to the 2-oxo-dATP site. The Mg(2+) site is built by G36, E52, E55, E56, and E100. A Nudix box motif is present at residues 37–58 (GKVQEGETIEDGAKRELREESG). Residue 117–120 (WPDD) coordinates 2-oxo-dATP.

Belongs to the Nudix hydrolase family. As to quaternary structure, monomer. Mg(2+) serves as cofactor.

Its subcellular location is the cytoplasm. It localises to the nucleus. It is found in the nucleus membrane. The protein resides in the cytoplasmic vesicle. The protein localises to the secretory vesicle. Its subcellular location is the acrosome. It carries out the reaction 2-oxo-dATP + H2O = 2-oxo-dAMP + diphosphate + H(+). It catalyses the reaction 2-oxo-ATP + H2O = 2-oxo-AMP + diphosphate + H(+). The catalysed reaction is 8-oxo-dGTP + H2O = 8-oxo-dGMP + diphosphate + H(+). The enzyme catalyses 8-oxo-dATP + H2O = 8-oxo-dAMP + diphosphate + H(+). It carries out the reaction O(6)-methyl-dGTP + H2O = O(6)-methyl-dGMP + diphosphate + H(+). It catalyses the reaction N(6)-methyl-dATP + H2O = N(6)-methyl-dAMP + diphosphate + H(+). The catalysed reaction is N(6)-methyl-ATP + H2O = N(6)-methyl-AMP + diphosphate + H(+). Oxidized purine nucleoside triphosphate hydrolase which is a prominent sanitizer of the oxidized nucleotide pool. Catalyzes the hydrolysis of 2-oxo-dATP (2-hydroxy-dATP) into 2-oxo-dAMP. Also has a significant hydrolase activity toward 2-oxo-ATP, 8-oxo-dGTP and 8-oxo-dATP. Through the hydrolysis of oxidized purine nucleoside triphosphates, prevents their incorporation into DNA and the subsequent transversions A:T to C:G and G:C to T:A. Also catalyzes the hydrolysis of methylated purine nucleoside triphosphate preventing their integration into DNA. Through this antimutagenic activity protects cells from oxidative stress. The sequence is that of Oxidized purine nucleoside triphosphate hydrolase (NUDT1) from Canis lupus familiaris (Dog).